Consider the following 157-residue polypeptide: uncharacterized protein (157 aa).

The N-acetyltransferase domain occupies 9–147 (LLINYKTLDE…DFYVWHPEVN (139 aa)).

This is an uncharacterized protein from Bacillus cereus (strain 03BB102).